Here is a 609-residue protein sequence, read N- to C-terminus: Chaperone protein DnaK (609 aa).

T172 carries the post-translational modification Phosphothreonine; by autocatalysis. Residues 578-609 form a disordered region; it reads QAQAQQQAGAGGAAKKDENVVDAEFEEVKDDK. Residues 597 to 609 are compositionally biased toward acidic residues; that stretch reads VVDAEFEEVKDDK.

Belongs to the heat shock protein 70 family.

Its function is as follows. Acts as a chaperone. In Geobacillus sp. (strain WCH70), this protein is Chaperone protein DnaK.